Here is a 256-residue protein sequence, read N- to C-terminus: Thiazole synthase (256 aa).

Lysine 97 serves as the catalytic Schiff-base intermediate with DXP. Residues glycine 158, 184-185 (AG), and 206-207 (NT) each bind 1-deoxy-D-xylulose 5-phosphate.

Belongs to the ThiG family. Homotetramer. Forms heterodimers with either ThiH or ThiS.

The protein localises to the cytoplasm. The enzyme catalyses [ThiS sulfur-carrier protein]-C-terminal-Gly-aminoethanethioate + 2-iminoacetate + 1-deoxy-D-xylulose 5-phosphate = [ThiS sulfur-carrier protein]-C-terminal Gly-Gly + 2-[(2R,5Z)-2-carboxy-4-methylthiazol-5(2H)-ylidene]ethyl phosphate + 2 H2O + H(+). It participates in cofactor biosynthesis; thiamine diphosphate biosynthesis. In terms of biological role, catalyzes the rearrangement of 1-deoxy-D-xylulose 5-phosphate (DXP) to produce the thiazole phosphate moiety of thiamine. Sulfur is provided by the thiocarboxylate moiety of the carrier protein ThiS. In vitro, sulfur can be provided by H(2)S. This Flavobacterium psychrophilum (strain ATCC 49511 / DSM 21280 / CIP 103535 / JIP02/86) protein is Thiazole synthase.